The following is a 380-amino-acid chain: Cytochrome b (380 aa).

The next 4 membrane-spanning stretches (helical) occupy residues 34–54, 78–100, 113–133, and 179–199; these read FGSLLGLFLTMQIITGIILAM, WLMRTMHMNGAAFMFICMYAHMG, TWNIGIIIMIATMATAFMGYV, and FFAFHFVLPFVLIALSGVHLL. Heme b contacts are provided by His84 and His98. Heme b is bound by residues His183 and His197. A ubiquinone is bound at residue His202. The next 4 helical transmembrane spans lie at 225–245, 289–309, 324–344, and 349–369; these read FSWKDLLGFAXMILIFCTITL, LGGVVALVGSLIIPATMMLTH, VIFWLFCANFIALSWIGAAPV, and ITLGQVFSMLYFLFFLTAPMI.

This sequence belongs to the cytochrome b family. In terms of assembly, the main subunits of complex b-c1 are: cytochrome b, cytochrome c1 and the Rieske protein. The cofactor is heme b.

Its subcellular location is the mitochondrion inner membrane. In terms of biological role, component of the ubiquinol-cytochrome c reductase complex (complex III or cytochrome b-c1 complex) that is part of the mitochondrial respiratory chain. The b-c1 complex mediates electron transfer from ubiquinol to cytochrome c. Contributes to the generation of a proton gradient across the mitochondrial membrane that is then used for ATP synthesis. The sequence is that of Cytochrome b (mt:Cyt-b) from Xenoturbella bocki (Marine worm).